A 112-amino-acid polypeptide reads, in one-letter code: Ribosome-binding factor A (112 aa).

This sequence belongs to the RbfA family. In terms of assembly, monomer. Binds 30S ribosomal subunits, but not 50S ribosomal subunits or 70S ribosomes.

The protein localises to the cytoplasm. In terms of biological role, one of several proteins that assist in the late maturation steps of the functional core of the 30S ribosomal subunit. Associates with free 30S ribosomal subunits (but not with 30S subunits that are part of 70S ribosomes or polysomes). Required for efficient processing of 16S rRNA. May interact with the 5'-terminal helix region of 16S rRNA. In Ruthia magnifica subsp. Calyptogena magnifica, this protein is Ribosome-binding factor A.